Reading from the N-terminus, the 890-residue chain is Nucleoside hydrolase 3 (890 aa).

The signal sequence occupies residues 1–21 (MLTSPTLKSLWFLFTILGLLG). 7 N-linked (GlcNAc...) asparagine glycosylation sites follow: asparagine 55, asparagine 232, asparagine 371, asparagine 485, asparagine 580, asparagine 655, and asparagine 740.

The protein belongs to the IUNH family.

Its subcellular location is the secreted. It localises to the extracellular space. The protein resides in the apoplast. The enzyme catalyses a purine D-ribonucleoside + H2O = a purine nucleobase + D-ribose. It catalyses the reaction inosine + H2O = hypoxanthine + D-ribose. The catalysed reaction is adenosine + H2O = D-ribose + adenine. Extracellular purine-specific hydrolase present in the apoplastic fluid involved in the degradation of extracellular nucleosides, including inosine and adenosine, and which may participate in wound and pathogen responses (e.g. Botrytis cinerea). This Arabidopsis thaliana (Mouse-ear cress) protein is Nucleoside hydrolase 3.